Consider the following 284-residue polypeptide: Homeobox protein CDX-4 (284 aa).

Disordered stretches follow at residues 15–40 (PGTL…SPMP) and 120–155 (GGGT…SRHS). The segment covering 22–37 (GGDGTAGTGGTGGGGS) has biased composition (gly residues). Residues 173–232 (KEKYRVVYTDHQRLELEKEFHCNRYITIQRKSELAVNLGLSERQVKIWFQNRRAKERKMI) constitute a DNA-binding region (homeobox). The span at 238 to 253 (QFENSGGSVQSDSDSI) shows a compositional bias: polar residues. A disordered region spans residues 238-259 (QFENSGGSVQSDSDSISPGELP).

It belongs to the Caudal homeobox family.

It is found in the nucleus. In Homo sapiens (Human), this protein is Homeobox protein CDX-4 (CDX4).